A 442-amino-acid chain; its full sequence is MEKKKVVIIGGGAAGMSAASRVKRLRPEWDVKVFEATEWVSHAPCGIPYVVEGIAPKEKLMHYPPEVFIKKRGIDLHLKAEVIEVETGYVRVRENGEEKSYEWDYLVFANGASPQIPEIEGVDLPGVFTADLPPDAVAITEYMEKNKVEDVVIIGTGYIALEMAEAFVTRGKNVTLIGRSERVLRKTFDKEITDIVEEKLRQHLNLRLHEKTLSIEGRERVEKVITDGGEYKADLVIIATGIKPNVELAKQLGVKIGETGAIWTNEKMQTSVENVYAAGDVAETKHVITGKRVWIPLAPAGNKMGYVAGSNIAGKEIEFPGVLGTSITKFMDLEIGKTGLTENEAVKEGYDVRTAFIKANTKPHYYPGGREIWLKGVVDNETNRLLGVQAVGAEILPRIDSAAAMITAGFTTKDVFFTDLAYAPPFAPVWDPLIVLARVLKF.

FAD is bound at residue 13–14 (AA). CoA is bound at residue Arg24. FAD contacts are provided by residues 35–36 (EA) and 42–44 (HAP). CoA contacts are provided by residues 41–45 (SHAPC), 62–63 (HY), and Arg72. Cys45 functions as the Redox-active in the catalytic mechanism. The FAD site is built by Val82, Asp280, and Ala298. CoA-binding residues include Asn302 and Lys358. Tyr422 serves as a coordination point for FAD. CoA is bound by residues Trp430 and Arg438.

This sequence belongs to the class-III pyridine nucleotide-disulfide oxidoreductase family. As to quaternary structure, homodimer. The cofactor is FAD.

Its subcellular location is the cytoplasm. It catalyses the reaction hydrogen sulfide + NADP(+) = sulfur + NADPH. The catalysed reaction is hydrogen sulfide + NAD(+) = sulfur + NADH. It carries out the reaction NADP(+) + 2 CoA = CoA-disulfide + NADPH + H(+). The enzyme catalyses NAD(+) + 2 CoA = CoA-disulfide + NADH + H(+). Functionally, catalyzes the CoA-dependent reduction of elemental sulfur (S(0)) to produce hydrogen sulfide. Can use both NADPH and NADH, but shows a preference for NADPH. May enable S(0) to be used, via sulfide, for iron-sulfur cluster synthesis by SipA. Also shows coenzyme A disulfide reductase (CoADR) activity with both NADH and NADPH. However, CoADR specific activity is about 20-fold lower than the sulfur reduction assay and CoADR activity appears to be an artifactual side reaction and is not thought to have any physiological relevance. Also shows NAD(P)H oxidase activity with both NADH and NADPH. In Pyrococcus furiosus (strain ATCC 43587 / DSM 3638 / JCM 8422 / Vc1), this protein is NAD(P)H sulfur oxidoreductase (CoA-dependent).